We begin with the raw amino-acid sequence, 330 residues long: D-lactate dehydrogenase (330 aa).

NAD(+) contacts are provided by residues Arg156 to Ile157, Asp176, Val206 to Pro207, Ala233 to Arg235, and Asp259. The active site involves Arg235. Glu264 is an active-site residue. His296 serves as the catalytic Proton donor.

It belongs to the D-isomer specific 2-hydroxyacid dehydrogenase family.

It catalyses the reaction (R)-lactate + NAD(+) = pyruvate + NADH + H(+). The polypeptide is D-lactate dehydrogenase (ldhD) (Staphylococcus aureus (strain MSSA476)).